Consider the following 178-residue polypeptide: uncharacterized protein (178 aa).

5 consecutive transmembrane segments (helical) span residues 1-21, 47-67, 75-95, 117-137, and 158-178; these read MISI…YGGG, MLAL…AYVG, GFLI…IVLL, VIAV…IKAI, and MHPA…IPYL.

It belongs to the chromate ion transporter (CHR) (TC 2.A.51) family.

The protein localises to the cell membrane. This is an uncharacterized protein from Bacillus subtilis (strain 168).